We begin with the raw amino-acid sequence, 310 residues long: Acetyl-coenzyme A carboxylase carboxyl transferase subunit beta, chloroplastic (310 aa).

In terms of domain architecture, CoA carboxyltransferase N-terminal spans 47–310; it reads LWARCDNCGN…LYLSVPYNKN (264 aa). 4 residues coordinate Zn(2+): Cys-51, Cys-54, Cys-70, and Cys-73. A C4-type zinc finger spans residues 51–73; the sequence is CDNCGNMLYVKFLKQNRSVCEEC.

It belongs to the AccD/PCCB family. In terms of assembly, acetyl-CoA carboxylase is a heterohexamer composed of biotin carboxyl carrier protein, biotin carboxylase and 2 subunits each of ACCase subunit alpha and ACCase plastid-coded subunit beta (accD). It depends on Zn(2+) as a cofactor.

The protein localises to the plastid. Its subcellular location is the chloroplast stroma. It catalyses the reaction N(6)-carboxybiotinyl-L-lysyl-[protein] + acetyl-CoA = N(6)-biotinyl-L-lysyl-[protein] + malonyl-CoA. It functions in the pathway lipid metabolism; malonyl-CoA biosynthesis; malonyl-CoA from acetyl-CoA: step 1/1. Its function is as follows. Component of the acetyl coenzyme A carboxylase (ACC) complex. Biotin carboxylase (BC) catalyzes the carboxylation of biotin on its carrier protein (BCCP) and then the CO(2) group is transferred by the transcarboxylase to acetyl-CoA to form malonyl-CoA. This is Acetyl-coenzyme A carboxylase carboxyl transferase subunit beta, chloroplastic from Adiantum capillus-veneris (Maidenhair fern).